The chain runs to 450 residues: Putative zinc metalloprotease TP_0600 (450 aa).

His18 provides a ligand contact to Zn(2+). Residue Glu19 is part of the active site. His22 contributes to the Zn(2+) binding site. Residues 102 to 124 (IAFAGPLANVLMAVMVLALVSAL) form a helical membrane-spanning segment. Residues 200-278 (TITPDRDAHT…SVVLTVLRSG (79 aa)) form the PDZ domain. A run of 2 helical transmembrane segments spans residues 384–406 (VCVS…LILF) and 421–443 (VLYY…AFWN).

The protein belongs to the peptidase M50B family. The cofactor is Zn(2+).

It is found in the cell inner membrane. The sequence is that of Putative zinc metalloprotease TP_0600 from Treponema pallidum (strain Nichols).